The sequence spans 35 residues: Photosystem II reaction center protein T (35 aa).

The helical transmembrane segment at 3-23 (ALVYTFLLVSTLGIIFFAIFF) threads the bilayer.

This sequence belongs to the PsbT family. As to quaternary structure, PSII is composed of 1 copy each of membrane proteins PsbA, PsbB, PsbC, PsbD, PsbE, PsbF, PsbH, PsbI, PsbJ, PsbK, PsbL, PsbM, PsbT, PsbY, PsbZ, Psb30/Ycf12, at least 3 peripheral proteins of the oxygen-evolving complex and a large number of cofactors. It forms dimeric complexes.

The protein localises to the plastid. Its subcellular location is the chloroplast thylakoid membrane. Functionally, found at the monomer-monomer interface of the photosystem II (PS II) dimer, plays a role in assembly and dimerization of PSII. PSII is a light-driven water plastoquinone oxidoreductase, using light energy to abstract electrons from H(2)O, generating a proton gradient subsequently used for ATP formation. In Stangeria eriopus (Natal grass cycad), this protein is Photosystem II reaction center protein T.